Here is a 533-residue protein sequence, read N- to C-terminus: CTP synthase (533 aa).

Residues 1 to 264 (MKYIFVTGGV…GKLVTEKLNL (264 aa)) form an amidoligase domain region. Ser12 provides a ligand contact to CTP. Ser12 contacts UTP. ATP contacts are provided by residues 13–18 (SLGKGI) and Asp70. 2 residues coordinate Mg(2+): Asp70 and Glu138. CTP contacts are provided by residues 145–147 (DIE), 185–190 (KTKPTQ), and Lys221. UTP-binding positions include 185–190 (KTKPTQ) and Lys221. Position 237–239 (237–239 (KDA)) interacts with ATP. Residues 289–533 (TIGIVGKYIE…HGLVKASIEK (245 aa)) enclose the Glutamine amidotransferase type-1 domain. An L-glutamine-binding site is contributed by Gly357. Catalysis depends on Cys384, which acts as the Nucleophile; for glutamine hydrolysis. Residues 385-388 (LGMQ), Glu407, and Arg464 contribute to the L-glutamine site. Catalysis depends on residues His509 and Glu511.

Belongs to the CTP synthase family. Homotetramer.

It catalyses the reaction UTP + L-glutamine + ATP + H2O = CTP + L-glutamate + ADP + phosphate + 2 H(+). The catalysed reaction is L-glutamine + H2O = L-glutamate + NH4(+). The enzyme catalyses UTP + NH4(+) + ATP = CTP + ADP + phosphate + 2 H(+). Its pathway is pyrimidine metabolism; CTP biosynthesis via de novo pathway; CTP from UDP: step 2/2. With respect to regulation, allosterically activated by GTP, when glutamine is the substrate; GTP has no effect on the reaction when ammonia is the substrate. The allosteric effector GTP functions by stabilizing the protein conformation that binds the tetrahedral intermediate(s) formed during glutamine hydrolysis. Inhibited by the product CTP, via allosteric rather than competitive inhibition. In terms of biological role, catalyzes the ATP-dependent amination of UTP to CTP with either L-glutamine or ammonia as the source of nitrogen. Regulates intracellular CTP levels through interactions with the four ribonucleotide triphosphates. The polypeptide is CTP synthase (Methanococcus maripaludis (strain DSM 14266 / JCM 13030 / NBRC 101832 / S2 / LL)).